We begin with the raw amino-acid sequence, 114 residues long: UPF0145 protein YG5714_0873 (114 aa).

The protein belongs to the UPF0145 family.

The polypeptide is UPF0145 protein YG5714_0873 (Saccharolobus islandicus (strain Y.G.57.14 / Yellowstone #1) (Sulfolobus islandicus)).